The sequence spans 237 residues: H/ACA ribonucleoprotein complex subunit 1 (237 aa).

2 stretches are compositionally biased toward gly residues: residues 1–59 (MGFG…GGRG) and 172–237 (RGGG…RGRW). Disordered regions lie at residues 1–64 (MGFG…FDTG) and 157–237 (KPPQ…RGRW). RGG-box stretches follow at residues 4-56 (GKPR…GRGG) and 166-236 (KAFT…GRGR).

This sequence belongs to the GAR1 family. As to quaternary structure, component of the box H/ACA small nucleolar ribonucleoprotein (H/ACA snoRNP) complex consisting of Nop60B, Gar1, NPH2 and Nop10, and associated with H/ACA-type snoRNAs.

Its subcellular location is the nucleus. It is found in the nucleolus. Its function is as follows. Component of the box H/ACA small nucleolar ribonucleoprotein (H/ACA snoRNP) complex, which catalyzes pseudouridylation of rRNA. This involves the isomerization of uridine such that the ribose is subsequently attached to C5, instead of the normal N1. Pseudouridine ('psi') residues may serve to stabilize the conformation of rRNAs. Required for ribosome biogenesis. H/ACA snoRNP complex-dependent ribosome biogenesis is important in female germline cell differentiation during oogenesis. In Drosophila melanogaster (Fruit fly), this protein is H/ACA ribonucleoprotein complex subunit 1.